The sequence spans 347 residues: MITTTGLTKVYRSRGREVTALDGVDLHVREGEVYGVIGQSGAGKSSLIRCVNLLERPTSGTVTVAGQDLTALAGRGPRAGKELRTARSHIGMVFQHFNLLSSRTVQDNVELPLEILGVSGRERGRKALELLDLVGLTDKAKAYPAQLSGGQKQRVGIARALAGDPKVLLSDEATSALDPETTRSILQLLRDLNRQLGLTVLLITHEMNVVKSICDSAALMEKGRIVESGTVSELLGTPGSELASALFPVTGDASGDDRTVVDVTFHGEAATQPVISQLSRTYNIDISILGAAIDTVGGLQVGRMRIELPGRYEDNVVPIGFLREQGLQIDVVDKSDQESVLVKEGAK.

Positions Ile-2–Phe-247 constitute an ABC transporter domain. Gly-38–Ser-45 contributes to the ATP binding site.

It belongs to the ABC transporter superfamily. Methionine importer (TC 3.A.1.24) family. The complex is composed of two ATP-binding proteins (MetN), two transmembrane proteins (MetI) and a solute-binding protein (MetQ).

It is found in the cell membrane. It carries out the reaction L-methionine(out) + ATP + H2O = L-methionine(in) + ADP + phosphate + H(+). The enzyme catalyses D-methionine(out) + ATP + H2O = D-methionine(in) + ADP + phosphate + H(+). In terms of biological role, part of the ABC transporter complex MetNIQ involved in methionine import. Responsible for energy coupling to the transport system. This is Methionine import ATP-binding protein MetN from Streptomyces avermitilis (strain ATCC 31267 / DSM 46492 / JCM 5070 / NBRC 14893 / NCIMB 12804 / NRRL 8165 / MA-4680).